A 350-amino-acid polypeptide reads, in one-letter code: DNA polymerase delta subunit 3 (350 aa).

Positions 131–350 (EEKSKPLVRP…LESFFKRKAK (220 aa)) are disordered. Basic and acidic residues-rich tracts occupy residues 146 to 162 (TTPEETTGRKSKSKDMG) and 172 to 195 (MKKDRDDKETSRQNELRKRKEENL). Thr-223 bears the Phosphothreonine mark. Ser-230 carries the post-translational modification Phosphoserine. Residues 234-248 (SPKETDSNDKDKNND) are compositionally biased toward basic and acidic residues. Residues 249-262 (DLEDLLETTAEDSL) show a composition bias toward acidic residues. Positions 274 to 286 (SETEHSKEPKSEE) are enriched in basic and acidic residues. Over residues 320 to 332 (LSSSKKQETPSSN) the composition is skewed to polar residues.

In terms of assembly, DNA polymerase delta is a heterotrimer of POL3, POL32 and HYS2. POL32 can form homodimers.

It is found in the nucleus. Its function is as follows. DNA polymerase delta (DNA polymerase III) participates in chromosomal DNA replication. It is required during synthesis of the leading and lagging DNA strands at the replication fork and binds at/or near replication origins and moves along DNA with the replication fork. It has 3'-5' proofreading exonuclease activity that correct errors arising during DNA replication. It is also involved in DNA synthesis during DNA repair. The polypeptide is DNA polymerase delta subunit 3 (POL32) (Saccharomyces cerevisiae (strain ATCC 204508 / S288c) (Baker's yeast)).